The primary structure comprises 147 residues: Hemoglobin subunit beta (147 aa).

Val-2 carries the N-acetylvaline modification. One can recognise a Globin domain in the interval 3–147; it reads HLTGEEKGIV…VATALAHKYH (145 aa). Thr-13 is subject to Phosphothreonine. Ser-45 bears the Phosphoserine mark. The residue at position 60 (Lys-60) is an N6-acetyllysine. A heme b-binding site is contributed by His-64. Position 83 is an N6-acetyllysine (Lys-83). His-93 lines the heme b pocket. Cys-94 is modified (S-nitrosocysteine). At Lys-145 the chain carries N6-acetyllysine.

This sequence belongs to the globin family. In terms of assembly, heterotetramer of two alpha chains and two beta chains. Red blood cells.

Involved in oxygen transport from the lung to the various peripheral tissues. This Rhinolophus ferrumequinum (Greater horseshoe bat) protein is Hemoglobin subunit beta (HBB).